Here is an 82-residue protein sequence, read N- to C-terminus: Large ribosomal subunit protein uL23 (82 aa).

Belongs to the universal ribosomal protein uL23 family. Part of the 50S ribosomal subunit. Contacts protein L29.

Functionally, binds to 23S rRNA. One of the proteins that surrounds the polypeptide exit tunnel on the outside of the ribosome. The chain is Large ribosomal subunit protein uL23 from Methanosarcina mazei (strain ATCC BAA-159 / DSM 3647 / Goe1 / Go1 / JCM 11833 / OCM 88) (Methanosarcina frisia).